The following is a 349-amino-acid chain: D-alanine--D-alanine ligase (349 aa).

Positions 140–345 (NILFEAMGIP…MKDVFTWLLE (206 aa)) constitute an ATP-grasp domain. Residue 169-224 (NLSFSYPVFIKPTLGGSSVNTGMAKTAEEAMTLVDKIFVTDDRVLVQKLVSGTEVS) coordinates ATP. Mg(2+) contacts are provided by D300, E312, and N314.

Belongs to the D-alanine--D-alanine ligase family. The cofactor is Mg(2+). Mn(2+) serves as cofactor.

It is found in the cytoplasm. The enzyme catalyses 2 D-alanine + ATP = D-alanyl-D-alanine + ADP + phosphate + H(+). Its pathway is cell wall biogenesis; peptidoglycan biosynthesis. Functionally, cell wall formation. This chain is D-alanine--D-alanine ligase, found in Leptospira biflexa serovar Patoc (strain Patoc 1 / Ames).